Here is a 455-residue protein sequence, read N- to C-terminus: MYVQDTIAAISTPTGEGGVGIIRVSGRHVLSIADAIFKRNRDGGLQSHRFYYGAIIDPVSADCLDEVMVVFMKGPHSYTREDVLEIQCHGGYLVVQRILDLVLQQGTRLAGPGEFTKRAFLNGRIDLVQAEAIIDVIRSKTEKSLALAQHQREGLLSQRIARVKDGIVSSLALIEAFIDFPEEDIDVLGIQQVGAHVDCSLTELETLLAGFNEGKVLRDGVSVVIAGKPNVGKSSLLNTLLREKRAIVTSVPGTTRDLIEEVVTIKGLPVKLLDTAGIRESDDRVEREGIKLSLDKIPSADLVLFIIDSSLPFSSEDQAILDVLAPCNFIVVMNKSDICRSFDMPQLPDVPIIAVSTLTGDGIDALQDAIFEAFIHNHAVDSREYVAVSQARHRDALQKSRDALLRFRGNLVAGMELDLLAIDLRDALSAIGEVTGETTADDVLDLIFQRFCIGK.

Positions 23, 85, and 124 each coordinate (6S)-5-formyl-5,6,7,8-tetrahydrofolate. A TrmE-type G domain is found at 220 to 375 (GVSVVIAGKP…LQDAIFEAFI (156 aa)). K(+) is bound at residue Asn230. GTP is bound by residues 230–235 (NVGKSS), 249–255 (TSVPGTT), and 274–277 (DTAG). Ser234 lines the Mg(2+) pocket. Residues Thr249, Val251, and Thr254 each contribute to the K(+) site. Thr255 contributes to the Mg(2+) binding site. Lys455 lines the (6S)-5-formyl-5,6,7,8-tetrahydrofolate pocket.

It belongs to the TRAFAC class TrmE-Era-EngA-EngB-Septin-like GTPase superfamily. TrmE GTPase family. Homodimer. Heterotetramer of two MnmE and two MnmG subunits. Requires K(+) as cofactor.

It is found in the cytoplasm. In terms of biological role, exhibits a very high intrinsic GTPase hydrolysis rate. Involved in the addition of a carboxymethylaminomethyl (cmnm) group at the wobble position (U34) of certain tRNAs, forming tRNA-cmnm(5)s(2)U34. This is tRNA modification GTPase MnmE from Geotalea uraniireducens (strain Rf4) (Geobacter uraniireducens).